A 1857-amino-acid polypeptide reads, in one-letter code: Fatty acid synthase subunit alpha (1857 aa).

The segment at 96–132 (EEEPEATEPAPSATPAAPAAAPAAGAPPPPPSAGPAA) is disordered. Residues 102–119 (TEPAPSATPAAPAAAPAA) are compositionally biased toward low complexity. The 76-residue stretch at 139 to 214 (VTAVDILRTL…ASMQATFNGQ (76 aa)) folds into the Carrier domain. O-(pantetheine 4'-phosphoryl)serine is present on serine 174. The tract at residues 577-604 (QIIPQENGHSKKGGRSAAKRNTPTRPGK) is disordered. Residues 648-845 (KNVLMTGAGA…GAVIGWTRGT (198 aa)) are beta-ketoacyl reductase. Positions 1092 to 1633 (LQEIVIQEDL…QKGAQVIGIH (542 aa)) constitute a Ketosynthase family 3 (KS3) domain. Active-site for beta-ketoacyl synthase activity residues include cysteine 1275, histidine 1518, and histidine 1559. Mg(2+)-binding residues include aspartate 1743, valine 1744, and glutamate 1745. Acetyl-CoA is bound by residues 1743–1745 (DVE), tyrosine 1769, serine 1779, 1788–1798 (EAVFKSLGVSS), 1812–1815 (VDAN), and 1842–1844 (ISH). Mg(2+) is bound by residues serine 1843 and histidine 1844.

This sequence belongs to the thiolase-like superfamily. Fungal fatty acid synthetase subunit alpha family. As to quaternary structure, [Alpha(6)beta(6)] hexamers of two multifunctional subunits (alpha and beta).

The catalysed reaction is acetyl-CoA + n malonyl-CoA + 2n NADPH + 4n H(+) = a long-chain-acyl-CoA + n CoA + n CO2 + 2n NADP(+).. It catalyses the reaction a fatty acyl-[ACP] + malonyl-[ACP] + H(+) = a 3-oxoacyl-[ACP] + holo-[ACP] + CO2. The enzyme catalyses a (3R)-hydroxyacyl-[ACP] + NADP(+) = a 3-oxoacyl-[ACP] + NADPH + H(+). Functionally, fatty acid synthetase catalyzes the formation of long-chain fatty acids from acetyl-CoA, malonyl-CoA and NADPH. The alpha subunit contains domains for: acyl carrier protein, 3-oxoacyl-[acyl-carrier-protein] reductase, and 3-oxoacyl-[acyl-carrier-protein] synthase. In Penicillium patulum (Penicillium griseofulvum), this protein is Fatty acid synthase subunit alpha (FAS2).